Reading from the N-terminus, the 513-residue chain is Histidine ammonia-lyase (513 aa).

A cross-link (5-imidazolinone (Ala-Gly)) is located at residues 142-144 (ASG). Residue S143 is modified to 2,3-didehydroalanine (Ser).

It belongs to the PAL/histidase family. In terms of processing, contains an active site 4-methylidene-imidazol-5-one (MIO), which is formed autocatalytically by cyclization and dehydration of residues Ala-Ser-Gly.

Its subcellular location is the cytoplasm. The enzyme catalyses L-histidine = trans-urocanate + NH4(+). The protein operates within amino-acid degradation; L-histidine degradation into L-glutamate; N-formimidoyl-L-glutamate from L-histidine: step 1/3. The polypeptide is Histidine ammonia-lyase (Mesorhizobium japonicum (strain LMG 29417 / CECT 9101 / MAFF 303099) (Mesorhizobium loti (strain MAFF 303099))).